Reading from the N-terminus, the 697-residue chain is DNA ligase (697 aa).

NAD(+) contacts are provided by residues 34–38 (DKTYD), 83–84 (SL), and Glu114. The N6-AMP-lysine intermediate role is filled by Lys116. Positions 137, 171, 315, and 339 each coordinate NAD(+). Cys430, Cys433, Cys448, and Cys453 together coordinate Zn(2+). A BRCT domain is found at 616 to 697 (KKSSKLNNLN…FHNLLKEENA (82 aa)).

It belongs to the NAD-dependent DNA ligase family. LigA subfamily. The cofactor is Mg(2+). Requires Mn(2+) as cofactor.

It catalyses the reaction NAD(+) + (deoxyribonucleotide)n-3'-hydroxyl + 5'-phospho-(deoxyribonucleotide)m = (deoxyribonucleotide)n+m + AMP + beta-nicotinamide D-nucleotide.. DNA ligase that catalyzes the formation of phosphodiester linkages between 5'-phosphoryl and 3'-hydroxyl groups in double-stranded DNA using NAD as a coenzyme and as the energy source for the reaction. It is essential for DNA replication and repair of damaged DNA. The chain is DNA ligase from Mycoplasmopsis synoviae (strain 53) (Mycoplasma synoviae).